We begin with the raw amino-acid sequence, 277 residues long: Glutamate racemase (277 aa).

Residues 16 to 17 and 48 to 49 each bind substrate; these read DS and YG. Cys79 acts as the Proton donor/acceptor in catalysis. 80–81 serves as a coordination point for substrate; that stretch reads NT. Cys191 serves as the catalytic Proton donor/acceptor. Substrate is bound at residue 192 to 193; that stretch reads TH.

The protein belongs to the aspartate/glutamate racemases family.

It catalyses the reaction L-glutamate = D-glutamate. The protein operates within cell wall biogenesis; peptidoglycan biosynthesis. In terms of biological role, provides the (R)-glutamate required for cell wall biosynthesis. This is Glutamate racemase from Symbiobacterium thermophilum (strain DSM 24528 / JCM 14929 / IAM 14863 / T).